We begin with the raw amino-acid sequence, 259 residues long: UPF0246 protein PBPRA0561 (259 aa).

The protein belongs to the UPF0246 family.

The polypeptide is UPF0246 protein PBPRA0561 (Photobacterium profundum (strain SS9)).